We begin with the raw amino-acid sequence, 504 residues long: Phosphoenolpyruvate carboxylase (504 aa).

The span at Met1–Asp16 shows a compositional bias: polar residues. A disordered region spans residues Met1 to Pro21.

This sequence belongs to the PEPCase type 2 family. In terms of assembly, homotetramer. The cofactor is Mg(2+).

It carries out the reaction oxaloacetate + phosphate = phosphoenolpyruvate + hydrogencarbonate. In terms of biological role, catalyzes the irreversible beta-carboxylation of phosphoenolpyruvate (PEP) to form oxaloacetate (OAA), a four-carbon dicarboxylic acid source for the tricarboxylic acid cycle. This is Phosphoenolpyruvate carboxylase from Leuconostoc mesenteroides subsp. mesenteroides (strain ATCC 8293 / DSM 20343 / BCRC 11652 / CCM 1803 / JCM 6124 / NCDO 523 / NBRC 100496 / NCIMB 8023 / NCTC 12954 / NRRL B-1118 / 37Y).